The chain runs to 283 residues: Bifunctional protein FolD (283 aa).

Residues 164-166 (GRS), Ser189, and Ile230 each bind NADP(+).

This sequence belongs to the tetrahydrofolate dehydrogenase/cyclohydrolase family. As to quaternary structure, homodimer.

The catalysed reaction is (6R)-5,10-methylene-5,6,7,8-tetrahydrofolate + NADP(+) = (6R)-5,10-methenyltetrahydrofolate + NADPH. It catalyses the reaction (6R)-5,10-methenyltetrahydrofolate + H2O = (6R)-10-formyltetrahydrofolate + H(+). It functions in the pathway one-carbon metabolism; tetrahydrofolate interconversion. Catalyzes the oxidation of 5,10-methylenetetrahydrofolate to 5,10-methenyltetrahydrofolate and then the hydrolysis of 5,10-methenyltetrahydrofolate to 10-formyltetrahydrofolate. The sequence is that of Bifunctional protein FolD from Lacticaseibacillus paracasei (strain ATCC 334 / BCRC 17002 / CCUG 31169 / CIP 107868 / KCTC 3260 / NRRL B-441) (Lactobacillus paracasei).